A 430-amino-acid polypeptide reads, in one-letter code: Enolase (430 aa).

(2R)-2-phosphoglycerate is bound at residue Gln163. Catalysis depends on Glu205, which acts as the Proton donor. Mg(2+) contacts are provided by Asp242, Glu285, and Asp312. (2R)-2-phosphoglycerate-binding residues include Lys337, Arg366, Ser367, and Lys388. Lys337 acts as the Proton acceptor in catalysis.

The protein belongs to the enolase family. It depends on Mg(2+) as a cofactor.

It is found in the cytoplasm. It localises to the secreted. Its subcellular location is the cell surface. It catalyses the reaction (2R)-2-phosphoglycerate = phosphoenolpyruvate + H2O. It functions in the pathway carbohydrate degradation; glycolysis; pyruvate from D-glyceraldehyde 3-phosphate: step 4/5. Functionally, catalyzes the reversible conversion of 2-phosphoglycerate (2-PG) into phosphoenolpyruvate (PEP). It is essential for the degradation of carbohydrates via glycolysis. This Rhodopseudomonas palustris (strain BisB18) protein is Enolase.